A 265-amino-acid chain; its full sequence is Tryptophan synthase alpha chain (265 aa).

Active-site proton acceptor residues include glutamate 49 and aspartate 60.

The protein belongs to the TrpA family. Tetramer of two alpha and two beta chains.

The enzyme catalyses (1S,2R)-1-C-(indol-3-yl)glycerol 3-phosphate + L-serine = D-glyceraldehyde 3-phosphate + L-tryptophan + H2O. It participates in amino-acid biosynthesis; L-tryptophan biosynthesis; L-tryptophan from chorismate: step 5/5. Its function is as follows. The alpha subunit is responsible for the aldol cleavage of indoleglycerol phosphate to indole and glyceraldehyde 3-phosphate. In Cupriavidus metallidurans (strain ATCC 43123 / DSM 2839 / NBRC 102507 / CH34) (Ralstonia metallidurans), this protein is Tryptophan synthase alpha chain.